Reading from the N-terminus, the 678-residue chain is Depolymerase 2, capsule K56-specific (678 aa).

This sequence in the N-terminal section; belongs to the Przondovirus depolymerase 2 family. Homotrimer. Interacts (via N-terminus) with depolymerase 1 (via N-terminus); this interaction probably gives rise to a branched tailspike.

It is found in the virion. In terms of biological role, functions as a receptor binding protein (RBP) and probably mediates the attachment to the host capsular exopolysaccharides. Displays a depolymerase activity that specifically degrades the K56-type polysaccharides of Klebsiella pneumoniae capsule, which allows the phage to reach the host cell membrane and bind the entry receptor. In Klebsiella pneumoniae (Bacteriophage KN3-1), this protein is Depolymerase 2, capsule K56-specific.